Reading from the N-terminus, the 166-residue chain is Signal peptidase complex catalytic subunit SEC11 (166 aa).

The Cytoplasmic segment spans residues 1 to 9; that stretch reads MNIRQQLTQ. Residues 10–30 form a helical; Signal-anchor for type II membrane protein membrane-spanning segment; sequence LLTLGYVFASAFMLWKTLSVV. Topologically, residues 31–166 are lumenal; sequence ANLHSPIVVV…LGLSSLFSNE (136 aa). Active-site charge relay system residues include serine 44, histidine 83, and aspartate 108. The segment at 152 to 163 is C-terminal short (CTS) helix; that stretch reads GLLGLLGLSSLF.

The protein belongs to the peptidase S26B family. As to quaternary structure, component of the signal peptidase complex (SPC) composed of a catalytic subunit SEC11 and three accessory subunits SPC1, SPC2 and SPC3. The complex induces a local thinning of the ER membrane which is used to measure the length of the signal peptide (SP) h-region of protein substrates. This ensures the selectivity of the complex towards h-regions shorter than 18-20 amino acids. SPC associates with the translocon complex.

It localises to the endoplasmic reticulum membrane. It carries out the reaction Cleavage of hydrophobic, N-terminal signal or leader sequences from secreted and periplasmic proteins.. Functionally, catalytic component of the signal peptidase complex (SPC) which catalyzes the cleavage of N-terminal signal sequences from nascent proteins as they are translocated into the lumen of the endoplasmic reticulum. Specifically cleaves N-terminal signal peptides that contain a hydrophobic alpha-helix (h-region) shorter than 18-20 amino acids. The chain is Signal peptidase complex catalytic subunit SEC11 (SEC11) from Lodderomyces elongisporus (strain ATCC 11503 / CBS 2605 / JCM 1781 / NBRC 1676 / NRRL YB-4239) (Yeast).